Consider the following 454-residue polypeptide: Alkaline extracellular protease (454 aa).

An N-terminal signal peptide occupies residues 1-15 (MKLATAFTILTAVLA). The propeptide occupies 16–157 (APLAAPAPAP…EIPASSNAKR (142 aa)). The region spanning 68–146 (FIVVFDSSAT…TVEPDTIVSL (79 aa)) is the Inhibitor I9 domain. Asn123 is a glycosylation site (N-linked (GlcNAc...) asparagine). One can recognise a Peptidase S8 domain in the interval 166–454 (QWGLSRISHK…NAVAYNGVGI (289 aa)). Residues Asp200, His231, and Ser397 each act as charge relay system in the active site.

Belongs to the peptidase S8 family. Post-translationally, the pro-region is removed through cleavage by XPR6 after Lys156-Arg157, which yields mature active XPR2. The 10 consecutive -X-Ala- or -X-Pro- dipeptides located over 100 amino acids upstream of the N-terminal of mature XPR2 are subject to dipeptidyl aminopeptidase (DPAPase)-processing. DPAPase activity is not necessary for XPR6 cleavage and for secretion of mature active XPR2. In terms of processing, N-glycosylated. Glycosylation within the pro-region has no effect on secretion and maturation at 18 degrees Celsius, but is required for secretion at 28 degrees Celsius.

Its subcellular location is the secreted. It carries out the reaction Hydrolysis of proteins with broad specificity for peptide bonds, and a preference for a large uncharged residue in P1. Hydrolyzes peptide amides.. With respect to regulation, the protease activity is completely inhibited by the serine inhibitor PMSF but is not affected by thiol group inhibitors and in the presence of dithiothreitol. In the presence of high concentrations of o-phenanthroline the protease activity is only partially inhibited. The pro-region plays an inhibitory role and may provide a mechanism for preventing premature activation in the secretory pathway. Its function is as follows. Major secreted protein that belongs to the subtilisin family serine proteases. The polypeptide is Alkaline extracellular protease (Yarrowia lipolytica (strain CLIB 122 / E 150) (Yeast)).